The chain runs to 100 residues: Large ribosomal subunit protein uL23 (100 aa).

This sequence belongs to the universal ribosomal protein uL23 family. As to quaternary structure, part of the 50S ribosomal subunit. Contacts protein L29, and trigger factor when it is bound to the ribosome.

Its function is as follows. One of the early assembly proteins it binds 23S rRNA. One of the proteins that surrounds the polypeptide exit tunnel on the outside of the ribosome. Forms the main docking site for trigger factor binding to the ribosome. In Vibrio cholerae serotype O1 (strain ATCC 39541 / Classical Ogawa 395 / O395), this protein is Large ribosomal subunit protein uL23.